We begin with the raw amino-acid sequence, 551 residues long: Thermolysin (551 aa).

Residues 1-31 form the signal peptide; sequence MKRKMKMKLVRFGLAAGLAAQVFFLPYNALA. A propeptide spans 32-235 (activation peptide); the sequence is STEHVTWNQQ…DAAKPGDVKS (204 aa). Ca(2+)-binding residues include aspartate 292, aspartate 294, glutamine 296, and aspartate 373. Zn(2+) is bound at residue histidine 377. Glutamate 378 is a catalytic residue. Positions 381 and 401 each coordinate Zn(2+). The Ca(2+) site is built by glutamate 412, asparagine 418, aspartate 420, glutamate 422, glutamate 425, threonine 429, isoleucine 432, and aspartate 435. Histidine 466 (proton donor) is an active-site residue.

The protein belongs to the peptidase M4 family. Ca(2+) serves as cofactor. Zn(2+) is required as a cofactor.

The protein localises to the secreted. It carries out the reaction Preferential cleavage: Xaa-|-Leu &gt; Xaa-|-Phe.. Its function is as follows. Extracellular zinc metalloprotease. This Geobacillus stearothermophilus (Bacillus stearothermophilus) protein is Thermolysin (nprS).